The following is a 222-amino-acid chain: Kinetochore protein Spc25 (222 aa).

A coiled-coil region spans residues Arg-51–Ala-86.

This sequence belongs to the SPC25 family. In terms of assembly, component of the Ndc80 complex, which is composed of Ndc80, Nuf2 and Spc25.

It is found in the nucleus. It localises to the chromosome. The protein resides in the centromere. The protein localises to the kinetochore. In terms of biological role, acts as a component of the essential kinetochore-associated Ndc80 complex, which is required for chromosome segregation and spindle checkpoint activity during meiosis and mitosis. Required for kinetochore integrity and the organization of stable microtubule binding sites in the outer plate of the kinetochore. Participates in SAC signaling that responds specifically to disruptions in spindle microtubule dynamics. The NDC80 complex synergistically enhances the affinity of the SKA1 complex for microtubules and may allow the NDC80 complex to track depolymerizing microtubules. This is Kinetochore protein Spc25 from Drosophila melanogaster (Fruit fly).